Consider the following 105-residue polypeptide: Structural protein 11 (105 aa).

Positions 59 to 97 form a coiled coil; the sequence is NLIKSIQRARDVSEGEARELKDDMVTELEKAETKEERRD.

The protein localises to the virion. The protein is Structural protein 11 of His1 virus (isolate Australia/Victoria) (His1V).